Consider the following 155-residue polypeptide: Eosinophil cationic protein (155 aa).

Positions 1 to 25 (MGLKLLESRLCLLLSLGLVLMLASC) are cleaved as a signal peptide. The Proton acceptor role is filled by His-38. 4 cysteine pairs are disulfide-bonded: Cys-47–Cys-106, Cys-61–Cys-118, Cys-79–Cys-133, and Cys-86–Cys-94. 62 to 66 (KDINT) serves as a coordination point for substrate. Residues Asn-88 and Asn-107 are each glycosylated (N-linked (GlcNAc...) asparagine). Catalysis depends on His-150, which acts as the Proton donor.

The protein belongs to the pancreatic ribonuclease family.

It localises to the cytoplasmic granule. In terms of biological role, cytotoxin and helminthotoxin with ribonuclease activity. Possesses a wide variety of biological activities. This is Eosinophil cationic protein (Rnase3) from Rattus norvegicus (Rat).